A 178-amino-acid chain; its full sequence is uncharacterized protein (178 aa).

An N-acetyltransferase domain is found at 9–173 (LTLRKMELED…IDVYMFSLLK (165 aa)).

This is an uncharacterized protein from Bacillus licheniformis.